The primary structure comprises 111 residues: Colipase (111 aa).

The N-terminal stretch at 1-16 (MKVLVLLLVTLAVVYA) is a signal peptide. Residues 17–21 (APDPR) constitute a propeptide, enterostatin, activation peptide. 5 cysteine pairs are disulfide-bonded: Cys-33–Cys-44, Cys-39–Cys-55, Cys-43–Cys-77, Cys-65–Cys-85, and Cys-79–Cys-103.

The protein belongs to the colipase family. As to quaternary structure, forms a 1:1 stoichiometric complex with pancreatic lipase. In terms of tissue distribution, expressed by the pancreas.

The protein localises to the secreted. Colipase is a cofactor of pancreatic lipase. It allows the lipase to anchor itself to the lipid-water interface. Without colipase the enzyme is washed off by bile salts, which have an inhibitory effect on the lipase. Functionally, enterostatin has a biological activity as a satiety signal. The protein is Colipase (CLPS) of Ictidomys tridecemlineatus (Thirteen-lined ground squirrel).